Here is a 142-residue protein sequence, read N- to C-terminus: Small ribosomal subunit protein uS12 (142 aa).

It belongs to the universal ribosomal protein uS12 family. In terms of assembly, part of the 30S ribosomal subunit.

With S4 and S5 plays an important role in translational accuracy. Located at the interface of the 30S and 50S subunits. This chain is Small ribosomal subunit protein uS12, found in Methanoregula boonei (strain DSM 21154 / JCM 14090 / 6A8).